The chain runs to 220 residues: Cell division protein SepF (220 aa).

The segment at 1–120 (MAIKDAFNKM…RREQYQHAAH (120 aa)) is disordered. Over residues 26–35 (LSSKKQEEPV) the composition is skewed to basic and acidic residues. The span at 39-79 (QQTSRPNQQQQAARASQPQQPKQARPQMQAQQRPQSQSRAA) shows a compositional bias: low complexity. Over residues 93 to 102 (VSHDYNDRRA) the composition is skewed to basic and acidic residues.

The protein belongs to the SepF family. Homodimer. Interacts with FtsZ.

The protein resides in the cytoplasm. Its function is as follows. Cell division protein that is part of the divisome complex and is recruited early to the Z-ring. Probably stimulates Z-ring formation, perhaps through the cross-linking of FtsZ protofilaments. Its function overlaps with FtsA. In Streptococcus equi subsp. equi (strain 4047), this protein is Cell division protein SepF.